Consider the following 717-residue polypeptide: Cleavage stimulation factor subunit 3 (717 aa).

Serine 2 bears the N-acetylserine mark. HAT repeat units follow at residues 45 to 77, 79 to 110, 117 to 152, 163 to 196, 221 to 261, 271 to 303, 319 to 352, 354 to 387, and 458 to 494; these read QPID…AEIK, KNYD…YVRE, SYKE…FLKG, QRIT…YEEG, KEYE…WEKS, LITK…YLEQ, LFSD…YEES, MKYE…FARR, and NEDN…FESN. Residues 683–704 form a disordered region; that stretch reads AVKRPNEDSDEDEEKGAVVPPV. Residue serine 691 is modified to Phosphoserine.

In terms of assembly, homodimer. The CSTF complex is composed of CSTF1 (50 kDa subunit), CSTF2 (64 kDa subunit) and CSTF3 (77 kDa subunit). CSTF3 directly interacts with CSTF1 and CSTF2. Interacts with FIP1L1.

It is found in the nucleus. Its function is as follows. One of the multiple factors required for polyadenylation and 3'-end cleavage of mammalian pre-mRNAs. This Mus musculus (Mouse) protein is Cleavage stimulation factor subunit 3 (Cstf3).